Consider the following 632-residue polypeptide: Signal-transduction and transcriptional-control protein (632 aa).

The PAS domain occupies 197 to 270; that stretch reads TYQYLNKITD…GQSYEDEEIM (74 aa). The Sigma-54 factor interaction domain maps to 324–554; it reads IIGQSEAMKR…LENCIENIVN (231 aa). ATP contacts are provided by residues 352 to 359 and 416 to 425; these read GESGTGKE and ANEGTLFLDE. The H-T-H motif DNA-binding region spans 606–625; the sequence is ISKACRILGINRSTLYIKIK.

The chain is Signal-transduction and transcriptional-control protein (stc) from Clostridium beijerinckii (Clostridium MP).